The sequence spans 332 residues: Anthranilate phosphoribosyltransferase (332 aa).

5-phospho-alpha-D-ribose 1-diphosphate-binding positions include glycine 79, 82–83 (GD), threonine 87, 89–92 (NIST), 107–115 (KHGNRSVSS), and serine 119. Residue glycine 79 participates in anthranilate binding. Position 91 (serine 91) interacts with Mg(2+). Position 110 (asparagine 110) interacts with anthranilate. Position 165 (arginine 165) interacts with anthranilate. Mg(2+) is bound by residues aspartate 223 and glutamate 224.

Belongs to the anthranilate phosphoribosyltransferase family. Homodimer. It depends on Mg(2+) as a cofactor.

The catalysed reaction is N-(5-phospho-beta-D-ribosyl)anthranilate + diphosphate = 5-phospho-alpha-D-ribose 1-diphosphate + anthranilate. It participates in amino-acid biosynthesis; L-tryptophan biosynthesis; L-tryptophan from chorismate: step 2/5. In terms of biological role, catalyzes the transfer of the phosphoribosyl group of 5-phosphorylribose-1-pyrophosphate (PRPP) to anthranilate to yield N-(5'-phosphoribosyl)-anthranilate (PRA). This is Anthranilate phosphoribosyltransferase from Vibrio vulnificus (strain YJ016).